A 184-amino-acid polypeptide reads, in one-letter code: dITP/XTP pyrophosphatase (184 aa).

Position 5-10 (5-10 (SSNRHK)) interacts with substrate. Residues Glu-33 and Asp-62 each coordinate Mg(2+). Asp-62 functions as the Proton acceptor in the catalytic mechanism. Residues Ser-63, 136 to 139 (WGFD), Lys-158, and 163 to 164 (HR) each bind substrate.

This sequence belongs to the HAM1 NTPase family. As to quaternary structure, homodimer. Mg(2+) is required as a cofactor.

The enzyme catalyses XTP + H2O = XMP + diphosphate + H(+). It catalyses the reaction dITP + H2O = dIMP + diphosphate + H(+). It carries out the reaction ITP + H2O = IMP + diphosphate + H(+). Functionally, pyrophosphatase that catalyzes the hydrolysis of nucleoside triphosphates to their monophosphate derivatives, with a high preference for the non-canonical purine nucleotides XTP (xanthosine triphosphate), dITP (deoxyinosine triphosphate) and ITP. Seems to function as a house-cleaning enzyme that removes non-canonical purine nucleotides from the nucleotide pool, thus preventing their incorporation into DNA/RNA and avoiding chromosomal lesions. The chain is dITP/XTP pyrophosphatase from Korarchaeum cryptofilum (strain OPF8).